Reading from the N-terminus, the 120-residue chain is UPF0231 protein KPN78578_01240 (120 aa).

This sequence belongs to the UPF0231 family.

This chain is UPF0231 protein KPN78578_01240, found in Klebsiella pneumoniae subsp. pneumoniae (strain ATCC 700721 / MGH 78578).